The following is a 358-amino-acid chain: tRNA-specific 2-thiouridylase MnmA (358 aa).

Residues 7–14 and methionine 33 contribute to the ATP site; that span reads AMSGGVDS. The active-site Nucleophile is cysteine 102. Cysteine 102 and cysteine 199 are disulfide-bonded. Glycine 126 is a binding site for ATP. Residues 149–151 form an interaction with tRNA region; that stretch reads KDQ. The Cysteine persulfide intermediate role is filled by cysteine 199. The interaction with tRNA stretch occupies residues 305–306; the sequence is RY.

It belongs to the MnmA/TRMU family.

Its subcellular location is the cytoplasm. The catalysed reaction is S-sulfanyl-L-cysteinyl-[protein] + uridine(34) in tRNA + AH2 + ATP = 2-thiouridine(34) in tRNA + L-cysteinyl-[protein] + A + AMP + diphosphate + H(+). Catalyzes the 2-thiolation of uridine at the wobble position (U34) of tRNA, leading to the formation of s(2)U34. This chain is tRNA-specific 2-thiouridylase MnmA, found in Halothermothrix orenii (strain H 168 / OCM 544 / DSM 9562).